The chain runs to 96 residues: Protein Vpr (96 aa).

The segment at 1-42 (MEQAPEDQGPQREPHNEWTLELLEELKNEAVRHFPRIWLHGL) is homooligomerization. 3 positions are modified to phosphoserine; by host: Ser-79, Ser-94, and Ser-96.

It belongs to the HIV-1 VPR protein family. Homooligomer, may form homodimer. Interacts with p6-gag region of the Pr55 Gag precursor protein through a (Leu-X-X)4 motif near the C-terminus of the P6gag protein. Interacts with host UNG. May interact with host RAD23A/HHR23A. Interacts with host VPRBP/DCAF1, leading to hijack the CUL4A-RBX1-DDB1-DCAF1/VPRBP complex, mediating ubiquitination of host proteins such as TERT and ZGPAT and arrest of the cell cycle in G2 phase. Phosphorylated on several residues by host. These phosphorylations regulate VPR activity for the nuclear import of the HIV-1 pre-integration complex.

It is found in the virion. It localises to the host nucleus. The protein localises to the host extracellular space. In terms of biological role, during virus entry, plays a role in the transport of the viral pre-integration (PIC) complex to the host nucleus. This function is crucial for viral infection of non-dividing macrophages. May act directly at the nuclear pore complex, by binding nucleoporins phenylalanine-glycine (FG)-repeat regions. Functionally, during virus replication, may deplete host UNG protein, and incude G2-M cell cycle arrest. Acts by targeting specific host proteins for degradation by the 26S proteasome, through association with the cellular CUL4A-DDB1 E3 ligase complex by direct interaction with host VPRPB/DCAF-1. Cell cycle arrest reportedly occurs within hours of infection and is not blocked by antiviral agents, suggesting that it is initiated by the VPR carried into the virion. Additionally, VPR induces apoptosis in a cell cycle dependent manner suggesting that these two effects are mechanistically linked. Detected in the serum and cerebrospinal fluid of AIDS patient, VPR may also induce cell death to bystander cells. The sequence is that of Protein Vpr from Human immunodeficiency virus type 1 group M subtype B (isolate BRU/LAI) (HIV-1).